A 225-amino-acid chain; its full sequence is Uracil-DNA glycosylase (225 aa).

The active-site Proton acceptor is aspartate 65.

This sequence belongs to the uracil-DNA glycosylase (UDG) superfamily. UNG family.

It is found in the cytoplasm. It carries out the reaction Hydrolyzes single-stranded DNA or mismatched double-stranded DNA and polynucleotides, releasing free uracil.. Its function is as follows. Excises uracil residues from the DNA which can arise as a result of misincorporation of dUMP residues by DNA polymerase or due to deamination of cytosine. The protein is Uracil-DNA glycosylase of Bacillus cytotoxicus (strain DSM 22905 / CIP 110041 / 391-98 / NVH 391-98).